The primary structure comprises 283 residues: Nucleotide-binding protein DR_1434 (283 aa).

8–15 (GLSGSGKS) provides a ligand contact to ATP. Residue 57–60 (DTRT) coordinates GTP.

It belongs to the RapZ-like family.

Its function is as follows. Displays ATPase and GTPase activities. This chain is Nucleotide-binding protein DR_1434, found in Deinococcus radiodurans (strain ATCC 13939 / DSM 20539 / JCM 16871 / CCUG 27074 / LMG 4051 / NBRC 15346 / NCIMB 9279 / VKM B-1422 / R1).